The chain runs to 251 residues: Ubiquinone/menaquinone biosynthesis C-methyltransferase UbiE (251 aa).

Residues Thr-74, Asp-95, and 123–124 (NA) each bind S-adenosyl-L-methionine.

The protein belongs to the class I-like SAM-binding methyltransferase superfamily. MenG/UbiE family.

It carries out the reaction a 2-demethylmenaquinol + S-adenosyl-L-methionine = a menaquinol + S-adenosyl-L-homocysteine + H(+). The enzyme catalyses a 2-methoxy-6-(all-trans-polyprenyl)benzene-1,4-diol + S-adenosyl-L-methionine = a 5-methoxy-2-methyl-3-(all-trans-polyprenyl)benzene-1,4-diol + S-adenosyl-L-homocysteine + H(+). Its pathway is quinol/quinone metabolism; menaquinone biosynthesis; menaquinol from 1,4-dihydroxy-2-naphthoate: step 2/2. It participates in cofactor biosynthesis; ubiquinone biosynthesis. Functionally, methyltransferase required for the conversion of demethylmenaquinol (DMKH2) to menaquinol (MKH2) and the conversion of 2-polyprenyl-6-methoxy-1,4-benzoquinol (DDMQH2) to 2-polyprenyl-3-methyl-6-methoxy-1,4-benzoquinol (DMQH2). This is Ubiquinone/menaquinone biosynthesis C-methyltransferase UbiE from Shewanella sediminis (strain HAW-EB3).